Reading from the N-terminus, the 440-residue chain is Phosphatidylcholine-sterol acyltransferase (440 aa).

Residues 1 to 24 form the signal peptide; the sequence is MGPPGSPWQWVLLLLGLLLPPAAP. A glycan (N-linked (GlcNAc...) asparagine) is linked at asparagine 44. Cysteine 74 and cysteine 98 are oxidised to a cystine. N-linked (GlcNAc...) asparagine glycosylation occurs at asparagine 108. Serine 205 functions as the Nucleophile in the catalytic mechanism. An N-linked (GlcNAc...) asparagine glycan is attached at asparagine 296. Cysteine 337 and cysteine 380 are disulfide-bonded. Residues aspartate 369 and histidine 401 each act as charge relay system in the active site. The N-linked (GlcNAc...) asparagine glycan is linked to asparagine 408.

The protein belongs to the AB hydrolase superfamily. Lipase family. Detected in blood plasma (at protein level). Highly expressed in liver.

The protein localises to the secreted. The enzyme catalyses a sterol + a 1,2-diacyl-sn-glycero-3-phosphocholine = a sterol ester + a 1-acyl-sn-glycero-3-phosphocholine. It catalyses the reaction a 1-O-alkyl-2-acetyl-sn-glycero-3-phosphocholine + H2O = a 1-O-alkyl-sn-glycero-3-phosphocholine + acetate + H(+). It carries out the reaction a 1-hexadecanoyl-2-acyl-sn-glycero-3-phosphocholine + (24S)-hydroxycholesterol = (24S)-24-hydroxycholesterol ester + 1-hexadecanoyl-sn-glycero-3-phosphocholine. The catalysed reaction is (24S)-hydroxycholesterol + 1-hexadecanoyl-2-(9Z,12Z-octadecadienoyl)-sn-glycero-3-phosphocholine = (24S)-hydroxycholesterol 3-linoleoate + 1-hexadecanoyl-sn-glycero-3-phosphocholine. The enzyme catalyses 1-hexadecanoyl-2-(5Z,8Z,11Z,14Z-eicosatetraenoyl)-sn-glycero-3-phosphocholine + cholesterol = cholesteryl (5Z,8Z,11Z,14Z)-eicosatetraenoate + 1-hexadecanoyl-sn-glycero-3-phosphocholine. It catalyses the reaction 1-hexadecanoyl-2-(9Z-octadecenoyl)-sn-glycero-3-phosphocholine + cholesterol = cholesteryl (9Z-octadecenoate) + 1-hexadecanoyl-sn-glycero-3-phosphocholine. It carries out the reaction 1-hexadecanoyl-2-(8Z,11Z,14Z-eicosatrienoyl)-sn-glycero-3-phosphocholine + cholesterol = cholesteryl (8Z,11Z,14Z)-eicosatrienoate + 1-hexadecanoyl-sn-glycero-3-phosphocholine. The catalysed reaction is 1-hexadecanoyl-2-(5Z,8Z,11Z-eicosatrienoyl)-sn-glycero-3-phosphocholine + cholesterol = cholesteryl (5Z,8Z,11Z)-eicosatrienoate + 1-hexadecanoyl-sn-glycero-3-phosphocholine. The enzyme catalyses 1-hexadecanoyl-2-(5Z,8Z,11Z,14Z,17Z-eicosapentaenoyl)-sn-glycero-3-phosphocholine + cholesterol = (5Z,8Z,11Z,14Z,17Z-eicosapentaenoyl)-cholesterol + 1-hexadecanoyl-sn-glycero-3-phosphocholine. It catalyses the reaction 1-hexadecanoyl-2-(9Z,12Z-octadecadienoyl)-sn-glycero-3-phosphocholine + cholesterol = cholesteryl (9Z,12Z)-octadecadienoate + 1-hexadecanoyl-sn-glycero-3-phosphocholine. It carries out the reaction 1-hexadecanoyl-2-(6Z,9Z,12Z-octadecatrienoyl)-sn-glycero-3-phosphocholine + cholesterol = (6Z,9Z,12Z-octadecatrienoyl)-cholesterol + 1-hexadecanoyl-sn-glycero-3-phosphocholine. The catalysed reaction is 1-hexadecanoyl-2-(11Z,14Z,17Z-eicosatrienoyl)-sn-glycero-3-phosphocholine + cholesterol = (11Z,14Z,17Z-eicosatrienoyl)-cholesterol + 1-hexadecanoyl-sn-glycero-3-phosphocholine. The enzyme catalyses 1-hexadecanoyl-2-(9Z,12Z,15Z-octadecatrienoyl)-sn-glycero-3-phosphocholine + cholesterol = (9Z,12Z,15Z-octadecatrienoyl)-cholesterol + 1-hexadecanoyl-sn-glycero-3-phosphocholine. It catalyses the reaction 1-hexadecanoyl-2-(9Z,12Z-octadecadienoyl)-sn-glycero-3-phosphocholine + H2O = (9Z,12Z)-octadecadienoate + 1-hexadecanoyl-sn-glycero-3-phosphocholine + H(+). It carries out the reaction 1-hexadecanoyl-2-(5Z,8Z,11Z,14Z-eicosatetraenoyl)-sn-glycero-3-phosphocholine + H2O = 1-hexadecanoyl-sn-glycero-3-phosphocholine + (5Z,8Z,11Z,14Z)-eicosatetraenoate + H(+). The catalysed reaction is a 1-O-alkyl-2-acetyl-sn-glycero-3-phosphocholine + 1-hexadecanoyl-sn-glycero-3-phosphocholine = 1-hexadecanoyl-2-acetyl-sn-glycero-3-phosphocholine + a 1-O-alkyl-sn-glycero-3-phosphocholine. In terms of biological role, central enzyme in the extracellular metabolism of plasma lipoproteins. Synthesized mainly in the liver and secreted into plasma where it converts cholesterol and phosphatidylcholines (lecithins) to cholesteryl esters and lysophosphatidylcholines on the surface of high and low density lipoproteins (HDLs and LDLs). The cholesterol ester is then transported back to the liver. Also produced in the brain by primary astrocytes, and esterifies free cholesterol on nascent APOE-containing lipoproteins secreted from glia and influences cerebral spinal fluid (CSF) APOE- and APOA1 levels. Together with APOE and the cholesterol transporter ABCA1, plays a key role in the maturation of glial-derived, nascent lipoproteins. Required for remodeling high-density lipoprotein particles into their spherical forms. Has a preference for plasma 16:0-18:2 or 18:O-18:2 phosphatidylcholines. Catalyzes the hydrolysis of 1-O-alkyl-2-acetyl-sn-glycero-3-phosphocholine (platelet-activating factor or PAF) to 1-O-alkyl-sn-glycero-3-phosphocholine (lyso-PAF). Also catalyzes the transfer of the acetate group from PAF to 1-hexadecanoyl-sn-glycero-3-phosphocholine forming lyso-PAF. Catalyzes the esterification of (24S)-hydroxycholesterol (24(S)OH-C), also known as cerebrosterol to produce 24(S)OH-C monoesters. The polypeptide is Phosphatidylcholine-sterol acyltransferase (LCAT) (Oryctolagus cuniculus (Rabbit)).